The sequence spans 142 residues: 3-hydroxyacyl-[acyl-carrier-protein] dehydratase FabZ (142 aa).

The active site involves H48.

It belongs to the thioester dehydratase family. FabZ subfamily.

It localises to the cytoplasm. The catalysed reaction is a (3R)-hydroxyacyl-[ACP] = a (2E)-enoyl-[ACP] + H2O. Functionally, involved in unsaturated fatty acids biosynthesis. Catalyzes the dehydration of short chain beta-hydroxyacyl-ACPs and long chain saturated and unsaturated beta-hydroxyacyl-ACPs. The chain is 3-hydroxyacyl-[acyl-carrier-protein] dehydratase FabZ from Ruminiclostridium cellulolyticum (strain ATCC 35319 / DSM 5812 / JCM 6584 / H10) (Clostridium cellulolyticum).